Reading from the N-terminus, the 226-residue chain is UPF0758 protein PputW619_0186 (226 aa).

The MPN domain maps to 102 to 224; that stretch reads ALESPSAVRR…PLSMVEQGWI (123 aa). Zn(2+) is bound by residues H173, H175, and D186. The JAMM motif motif lies at 173 to 186; the sequence is HNHPSGNSEPSQDD.

Belongs to the UPF0758 family.

This chain is UPF0758 protein PputW619_0186, found in Pseudomonas putida (strain W619).